Reading from the N-terminus, the 206-residue chain is Small ribosomal subunit protein uS4 (206 aa).

In terms of domain architecture, S4 RNA-binding spans 96–156 (CRLDNVVYRM…EKAKNQLRIV (61 aa)).

Belongs to the universal ribosomal protein uS4 family. As to quaternary structure, part of the 30S ribosomal subunit. Contacts protein S5. The interaction surface between S4 and S5 is involved in control of translational fidelity.

One of the primary rRNA binding proteins, it binds directly to 16S rRNA where it nucleates assembly of the body of the 30S subunit. Functionally, with S5 and S12 plays an important role in translational accuracy. This chain is Small ribosomal subunit protein uS4, found in Pseudomonas fluorescens (strain ATCC BAA-477 / NRRL B-23932 / Pf-5).